The chain runs to 469 residues: Glutamate--tRNA ligase (469 aa).

Residues 9–19 carry the 'HIGH' region motif; it reads PSPTGFLHVGG. Zn(2+) is bound by residues Cys98, Cys100, Cys125, and Asp127. The short motif at 236–240 is the 'KMSKS' region element; sequence KLSKR. Residue Lys239 coordinates ATP.

Belongs to the class-I aminoacyl-tRNA synthetase family. Glutamate--tRNA ligase type 1 subfamily. As to quaternary structure, monomer. It depends on Zn(2+) as a cofactor.

It localises to the cytoplasm. It carries out the reaction tRNA(Glu) + L-glutamate + ATP = L-glutamyl-tRNA(Glu) + AMP + diphosphate. In terms of biological role, catalyzes the attachment of glutamate to tRNA(Glu) in a two-step reaction: glutamate is first activated by ATP to form Glu-AMP and then transferred to the acceptor end of tRNA(Glu). This chain is Glutamate--tRNA ligase, found in Shewanella woodyi (strain ATCC 51908 / MS32).